The sequence spans 173 residues: dCTP deaminase, dUMP-forming (173 aa).

Residues 93–98 (RSSTGR), Asp-111, 119–121 (TLE), Gln-138, and Tyr-151 each bind dCTP. The Proton donor/acceptor role is filled by Glu-121.

Belongs to the dCTP deaminase family. As to quaternary structure, homotrimer.

The catalysed reaction is dCTP + 2 H2O = dUMP + NH4(+) + diphosphate. It functions in the pathway pyrimidine metabolism; dUMP biosynthesis; dUMP from dCTP: step 1/1. In terms of biological role, bifunctional enzyme that catalyzes both the deamination of dCTP to dUTP and the hydrolysis of dUTP to dUMP without releasing the toxic dUTP intermediate. The chain is dCTP deaminase, dUMP-forming from Clostridium beijerinckii (strain ATCC 51743 / NCIMB 8052) (Clostridium acetobutylicum).